Reading from the N-terminus, the 188-residue chain is Phosphoribosylglycinamide formyltransferase (188 aa).

12-14 (GSN) is a N(1)-(5-phospho-beta-D-ribosyl)glycinamide binding site. (6R)-10-formyltetrahydrofolate is bound by residues Lys66, 91 to 94 (MRLI), and Asn108. His110 (proton donor) is an active-site residue.

This sequence belongs to the GART family.

It catalyses the reaction N(1)-(5-phospho-beta-D-ribosyl)glycinamide + (6R)-10-formyltetrahydrofolate = N(2)-formyl-N(1)-(5-phospho-beta-D-ribosyl)glycinamide + (6S)-5,6,7,8-tetrahydrofolate + H(+). It participates in purine metabolism; IMP biosynthesis via de novo pathway; N(2)-formyl-N(1)-(5-phospho-D-ribosyl)glycinamide from N(1)-(5-phospho-D-ribosyl)glycinamide (10-formyl THF route): step 1/1. Functionally, catalyzes the transfer of a formyl group from 10-formyltetrahydrofolate to 5-phospho-ribosyl-glycinamide (GAR), producing 5-phospho-ribosyl-N-formylglycinamide (FGAR) and tetrahydrofolate. This chain is Phosphoribosylglycinamide formyltransferase, found in Staphylococcus aureus (strain COL).